An 854-amino-acid polypeptide reads, in one-letter code: Nucleolar MIF4G domain-containing protein 1 homolog (854 aa).

Disordered regions lie at residues 1–38 (MAKI…FAGK), 55–105 (QSQL…DAEV), 120–161 (PLGK…KQRI), and 217–306 (RKWE…RDAE). Over residues 15–28 (TRKEQRKQKSEFKK) the composition is skewed to basic and acidic residues. Residues 60–71 (KNKKKKRSKKPK) are compositionally biased toward basic residues. Positions 88 to 105 (IDSDDDESIDSDFSDAEV) are enriched in acidic residues. Composition is skewed to basic and acidic residues over residues 135–156 (RQDE…ESKS) and 217–238 (RKWE…KEEA). Positions 242-289 (SDEEEDKEDRDEPMDNFSEDDSGSEGEDDDEDLTGEEEQSEEDSEQEE) are enriched in acidic residues. The span at 290-306 (NAPKIKEDIYGRKRDAE) shows a compositional bias: basic and acidic residues. The MIF4G domain maps to 352-553 (LKQCKGLLNR…DILNAVKNNN (202 aa)). Residues 650-764 (AERRNIFCII…QLSVLKVVDF (115 aa)) enclose the MI domain.

The protein belongs to the CWC22 family.

Its subcellular location is the nucleus. The protein resides in the nucleolus. This Drosophila melanogaster (Fruit fly) protein is Nucleolar MIF4G domain-containing protein 1 homolog.